The primary structure comprises 338 residues: MTVKIGINGFGRIGRLAFRRIMDLGEETKDIEVVAINDLTTPAMLAHLLKYDSTHGTFDHEVSATEDSLVVDGKKYRVYAEPQAQNIPWVKNDGVDFVLECTGFYTSKAKSQAHLDAGAKRVLISAPAGNDLKTIVYSVNQDTLTADDTIVSAGSCTTNSLAPMANALNKEFGIQVGTMTTIHAYTATQKVLDGPDRGNNFRNARAAAENIIPHSTGAAKAIGLVLPELNGKLDGHAQRVPVKDGSETELVTILDKKVTAEEVNAAMKKYESPSFAYNADQIVSTDVLGMTAGSIFDPTQTQVITAGDKQLVKTVAWYDNEYSFTCQMVRTLLHFATL.

NAD(+)-binding positions include 12–13 (RI), Asp-38, and Ser-125. Residues 155–157 (SCT), Thr-186, 216–217 (TG), and Arg-239 each bind D-glyceraldehyde 3-phosphate. Cys-156 acts as the Nucleophile in catalysis. Asn-320 contributes to the NAD(+) binding site.

Belongs to the glyceraldehyde-3-phosphate dehydrogenase family. In terms of assembly, homotetramer.

It localises to the cytoplasm. It catalyses the reaction D-glyceraldehyde 3-phosphate + phosphate + NAD(+) = (2R)-3-phospho-glyceroyl phosphate + NADH + H(+). It functions in the pathway carbohydrate degradation; glycolysis; pyruvate from D-glyceraldehyde 3-phosphate: step 1/5. Its function is as follows. Catalyzes the oxidative phosphorylation of glyceraldehyde 3-phosphate (G3P) to 1,3-bisphosphoglycerate (BPG) using the cofactor NAD. The first reaction step involves the formation of a hemiacetal intermediate between G3P and a cysteine residue, and this hemiacetal intermediate is then oxidized to a thioester, with concomitant reduction of NAD to NADH. The reduced NADH is then exchanged with the second NAD, and the thioester is attacked by a nucleophilic inorganic phosphate to produce BPG. The protein is Glyceraldehyde-3-phosphate dehydrogenase (gap) of Lactobacillus delbrueckii subsp. bulgaricus.